Reading from the N-terminus, the 357-residue chain is Alanine racemase (357 aa).

Residue Lys-33 is the Proton acceptor; specific for D-alanine of the active site. Lys-33 carries the post-translational modification N6-(pyridoxal phosphate)lysine. A substrate-binding site is contributed by Arg-129. Catalysis depends on Tyr-253, which acts as the Proton acceptor; specific for L-alanine. Position 301 (Met-301) interacts with substrate.

The protein belongs to the alanine racemase family. In terms of assembly, homodimer. It depends on pyridoxal 5'-phosphate as a cofactor.

It catalyses the reaction L-alanine = D-alanine. It participates in amino-acid biosynthesis; D-alanine biosynthesis; D-alanine from L-alanine: step 1/1. In terms of biological role, catalyzes the interconversion of L-alanine and D-alanine. Is highly specific for alanine as substrate. May serve both anabolic and catabolic purposes. This is Alanine racemase from Pseudomonas taetrolens.